The sequence spans 239 residues: Type II restriction enzyme Eco47II (239 aa).

The catalysed reaction is Endonucleolytic cleavage of DNA to give specific double-stranded fragments with terminal 5'-phosphates.. Its function is as follows. A P subtype restriction enzyme that recognizes the double-stranded sequence 5'-GGNCC-3'; the cleavage site is unknown. In Escherichia coli, this protein is Type II restriction enzyme Eco47II.